The chain runs to 245 residues: Inner membrane protein YgaZ (245 aa).

The Cytoplasmic segment spans residues 1–24 (MESPTPQPAPGSATFMEGCKDSLP). A helical transmembrane segment spans residues 25 to 45 (IVISYIPVAFAFGLNATRLGF). Over 46-63 (SPLESVFFSCIIYAGASQ) the chain is Periplasmic. A helical transmembrane segment spans residues 64-84 (FVITAMLAAGSSLWIAALTVM). Residues 85–109 (AMDVRHVLYGPSLRSRIIQRLQKSK) are Cytoplasmic-facing. Residues 110-130 (TALWAFGLTDEVFAAATAKLV) form a helical membrane-spanning segment. At 131-140 (RNNRRWSENW) the chain is on the periplasmic side. The chain crosses the membrane as a helical span at residues 141 to 161 (MIGIAFSSWSSWVFGTVIGAF). Residues 162–172 (SGSGLLQGYPA) lie on the Cytoplasmic side of the membrane. A helical membrane pass occupies residues 173–193 (VEAALGFMLPALFMSFLLASF). At 194–205 (QRKQSLCVTAAL) the chain is on the periplasmic side. Residues 206-226 (VGALAGVTLFSIPVAILAGIV) traverse the membrane as a helical segment. Over 227 to 245 (CGCLTALIQAFWQGAPDEL) the chain is Cytoplasmic.

It belongs to the AzlC family.

It is found in the cell inner membrane. The polypeptide is Inner membrane protein YgaZ (ygaZ) (Escherichia coli (strain K12)).